We begin with the raw amino-acid sequence, 902 residues long: MAYNRLDDDYFDNRRPMNNRPPPHRTPSPGHPLQHGYQLDDAPYGRPGLNSASNLDIPMGPGRHTPSDQLQLHTAHSMANMSEPGYQQQPGGYRDEYSVNPEQHHDAYYNPTYTPTPNEAQTPYGEPGYEHDGRPLLPQQDSYGQYSDNPQQQQQQQGGLKRWKTVKRVPLYMGNLVLDCPVPPKLLNQFPHGERDEFTHMRYSAATCDPNDFYDEKFTLRQRLFSKPRETELFIVVTMYNEDEVLFARTMIGVFKNIEYMCKRPESKTWGKEAWKKIVVCIVSDGRAKINPRTRALLAGLGVYQEGIARQNVDDKPTTAHIYEYTTQIGMALKNDVVQLLPRQQPVQLLFCLKENNQKKINSHRWFFSAFGRVLNPNICVLLDAGTKPGGNSIYHLWKAFDLEPMCAGACGEIKAMLGTGGKNLFNPLVAAQNFEYKMSNILDKPLESAFGFISVLPGAFSAYRYIALQNDKNGQGPLEKYFAGEKLHGAGAGIFTANMYLAEDRILCFELVTKRNCHWILQYVKSATGETDVPDTATELILQRRRWLNGSFFAAIYAIAHFYQFFRSDHSFFRKIAFFIEFTFNTVNMIFAWFAIGNFFLVFKILTTSLGDETLLGTTGKILGVCFEWLYGVSLITCFVLAMGNRPAGSGPYYLAMIYFWAIIFCYLLFAAVFISVKAIMADAQRGLSVPELLKDQVVVTLILSIMSTYGIWLVASLLMFDPWHMFTSLVQYMLLSPTFTNVLNVYAFCNTHDISWGTKGDDKPDKLPSVSTKDGAGKADLPDEADLNTMYERELAVFAQKHVEEKKALTPSQLDEKQLDYYRGVRTVVVLLWMVTNFGLAAVVLSTAGLDRITPNTNAETKEQRATIYMAVVLYSVAALSGFKFIGAMWFLVVRMFRGV.

Positions 1–15 (MAYNRLDDDYFDNRR) are enriched in basic and acidic residues. The segment at 1–68 (MAYNRLDDDY…MGPGRHTPSD (68 aa)) is disordered. The span at 19–30 (NRPPPHRTPSPG) shows a compositional bias: pro residues. An N-linked (GlcNAc...) asparagine glycan is attached at Asn-80. Positions 104-161 (HHDAYYNPTYTPTPNEAQTPYGEPGYEHDGRPLLPQQDSYGQYSDNPQQQQQQQGGLK) are disordered. Polar residues-rich tracts occupy residues 111–121 (PTYTPTPNEAQ) and 139–150 (QQDSYGQYSDNP). The next 9 helical transmembrane spans lie at 449–469 (SAFG…YIAL), 547–567 (RWLN…YQFF), 577–597 (IAFF…WFAI), 623–643 (ILGV…FVLA), 656–676 (LAMI…AVFI), 699–719 (VVVT…VASL), 731–751 (LVQY…YAFC), 830–850 (VVVL…LSTA), and 874–894 (VVLY…MWFL).

It belongs to the chitin synthase family. Class II subfamily.

The protein localises to the cell membrane. It catalyses the reaction [(1-&gt;4)-N-acetyl-beta-D-glucosaminyl](n) + UDP-N-acetyl-alpha-D-glucosamine = [(1-&gt;4)-N-acetyl-beta-D-glucosaminyl](n+1) + UDP + H(+). Functionally, polymerizes chitin, a structural polymer of the cell wall and septum, by transferring the sugar moiety of UDP-GlcNAc to the non-reducing end of the growing chitin polymer. CHS1 and CHS3 have compensatory functions in cell wall modifications in responses to stresses. Might function as a negative regulator on expression of other CHS genes. In Pyricularia oryzae (strain 70-15 / ATCC MYA-4617 / FGSC 8958) (Rice blast fungus), this protein is Chitin synthase 3.